We begin with the raw amino-acid sequence, 121 residues long: uncharacterized protein (121 aa).

Disordered stretches follow at residues 24–43 (SGRTGGQRKGASLARPGRGG) and 100–121 (DHENSQNNSKRRCKVNCETDQR).

This is an uncharacterized protein from Homo sapiens (Human).